Consider the following 274-residue polypeptide: Cytochrome c oxidase subunit 3 (274 aa).

Residues 2–15 lie on the Cytoplasmic side of the membrane; sequence AHVKNHDYQILPPS. The chain crosses the membrane as a helical span at residues 16–36; that stretch reads IWPFFGAIGAFVMLTGAVAWM. The Periplasmic portion of the chain corresponds to 37-48; the sequence is KGITFFGLPVEG. Residues 49–77 form a helical membrane-spanning segment; it reads PWMFLIGLVGVLYVMFGWWADVVNEGETG. Over 78 to 79 the chain is Cytoplasmic; it reads EH. The chain crosses the membrane as a helical span at residues 80–115; sequence TPVVRIGLQYGFILFIMSEVMFFVAWFWAFIKNALY. The Periplasmic segment spans residues 116 to 139; the sequence is PMGPDSPIKDGVWPPEGIVTFDPW. A helical transmembrane segment spans residues 140–166; sequence HLPLINTLILLLSGVAVTWAHHAFVLE. Residues 167-168 are Cytoplasmic-facing; sequence GD. Residues 169–197 traverse the membrane as a helical segment; the sequence is RKTTINGLIVAVILGVCFTGLQAYEYSHA. The Periplasmic segment spans residues 198 to 203; it reads AFGLAD. A helical membrane pass occupies residues 204 to 237; it reads TVYAGAFYMATGFHGAHVIIGTIFLFVCLIRLLK. Residues 238 to 244 lie on the Cytoplasmic side of the membrane; the sequence is GQMTQKQ. The chain crosses the membrane as a helical span at residues 245 to 274; it reads HVGFEAAAWYWHFVDVVWLFLFVVIYIWGR.

Belongs to the cytochrome c oxidase subunit 3 family.

The protein resides in the cell inner membrane. It carries out the reaction 4 Fe(II)-[cytochrome c] + O2 + 8 H(+)(in) = 4 Fe(III)-[cytochrome c] + 2 H2O + 4 H(+)(out). The sequence is that of Cytochrome c oxidase subunit 3 (ctaE) from Paracoccus denitrificans.